Reading from the N-terminus, the 190-residue chain is Potassium-transporting ATPase KdpC subunit (190 aa).

Residues 13–33 (VGFLLLTLVCGVVYPGIVTII) form a helical membrane-spanning segment.

This sequence belongs to the KdpC family. In terms of assembly, the system is composed of three essential subunits: KdpA, KdpB and KdpC.

The protein resides in the cell membrane. In terms of biological role, part of the high-affinity ATP-driven potassium transport (or Kdp) system, which catalyzes the hydrolysis of ATP coupled with the electrogenic transport of potassium into the cytoplasm. This subunit acts as a catalytic chaperone that increases the ATP-binding affinity of the ATP-hydrolyzing subunit KdpB by the formation of a transient KdpB/KdpC/ATP ternary complex. This chain is Potassium-transporting ATPase KdpC subunit, found in Listeria welshimeri serovar 6b (strain ATCC 35897 / DSM 20650 / CCUG 15529 / CIP 8149 / NCTC 11857 / SLCC 5334 / V8).